The primary structure comprises 402 residues: S-adenosylmethionine synthase (402 aa).

137 to 142 (GQGSAD) is a binding site for ATP.

The protein belongs to the AdoMet synthase 2 family. The cofactor is Mg(2+).

It catalyses the reaction L-methionine + ATP + H2O = S-adenosyl-L-methionine + phosphate + diphosphate. Its pathway is amino-acid biosynthesis; S-adenosyl-L-methionine biosynthesis; S-adenosyl-L-methionine from L-methionine: step 1/1. In terms of biological role, catalyzes the formation of S-adenosylmethionine from methionine and ATP. This Pyrobaculum calidifontis (strain DSM 21063 / JCM 11548 / VA1) protein is S-adenosylmethionine synthase.